We begin with the raw amino-acid sequence, 2581 residues long: Chromodomain-helicase-DNA-binding protein 8 (2581 aa).

Disordered regions lie at residues 22–114 (DDSF…QTST), 253–281 (VKGS…TPAQ), and 349–375 (QKIQ…PLTL). Composition is skewed to polar residues over residues 42–64 (SLDS…SSAS) and 94–114 (DYTT…QTST). A compositionally biased stretch (low complexity) spans 255–267 (GSAPAGNPGATGP). Positions 355 to 370 (PQPPSSQPQPQPPPSA) are enriched in pro residues. At Ser-432 the chain carries Phosphoserine. Disordered stretches follow at residues 473–584 (RARG…KRKK) and 596–616 (DEEE…ILPE). Positions 493 to 516 (RPEEEGEKKRRKKSSGERLKEEKP) are enriched in basic and acidic residues. Phosphoserine occurs at positions 553 and 562. Over residues 572–584 (QKRRSNRQVKRKK) the composition is skewed to basic residues. A Glycyl lysine isopeptide (Lys-Gly) (interchain with G-Cter in SUMO) cross-link involves residue Lys-609. Chromo domains lie at 642–709 (AIVD…AQMR) and 724–790 (VEVD…RVNR). The 175-residue stretch at 823 to 997 (LFNWYNRQNC…FSLLHFLEPS (175 aa)) folds into the Helicase ATP-binding domain. 836–843 (DEMGLGKT) provides a ligand contact to ATP. A DEAH box motif is present at residues 948–951 (DEAH). Residues 1137–1288 (LIDKLLPKLK…KAVLQSMSGR (152 aa)) enclose the Helicase C-terminal domain. Ser-1420 and Ser-1424 each carry phosphoserine. The tract at residues 1692–1713 (EDPEYKPLQGPPKDPDDEGDPL) is disordered. Residues 1789–2302 (IARREKQQRW…LVELEVECME (514 aa)) form an interaction with FAM124B region. Phosphoserine occurs at positions 1976 and 1978. Residues 1988–2016 (QCTSRTASPSPLRPDVPAEKSPEENAVQV) are disordered. Thr-1993 is modified (phosphothreonine). Phosphoserine occurs at positions 1995, 1997, and 2008. Residue Lys-2025 forms a Glycyl lysine isopeptide (Lys-Gly) (interchain with G-Cter in SUMO2) linkage. 2 disordered regions span residues 2047 to 2118 (SSDT…YDEE) and 2179 to 2221 (NRRS…SSSA). The span at 2063-2072 (EDDDDSDSEL) shows a compositional bias: acidic residues. A phosphoserine mark is found at Ser-2068 and Ser-2070. A compositionally biased stretch (low complexity) spans 2075–2094 (SKLSPSSSSSSSSSSSSSSS). Basic and acidic residues predominate over residues 2102-2116 (EEKLTADRSRPKLYD). Residues Ser-2182, Ser-2200, and Ser-2202 each carry the phosphoserine modification. The residue at position 2204 (Thr-2204) is a Phosphothreonine. Ser-2211 carries the phosphoserine modification. At Thr-2215 the chain carries Phosphothreonine. At Ser-2223 the chain carries Phosphoserine. Residue Lys-2256 forms a Glycyl lysine isopeptide (Lys-Gly) (interchain with G-Cter in SUMO2) linkage. The interval 2484–2581 (PHVDSSTMLH…NSDSSDDADD (98 aa)) is disordered. Basic residues predominate over residues 2492 to 2510 (LHHHHHHPHPHHHHHHHPG). The span at 2513–2528 (TTGYPSSPATTTSGTA) shows a compositional bias: low complexity. Phosphoserine is present on Ser-2519. Residues 2537–2550 (EDDDEEEDEDDDDL) show a composition bias toward acidic residues. Positions 2565–2574 (DDPMMPANSD) are enriched in low complexity.

This sequence belongs to the SNF2/RAD54 helicase family. CHD8 subfamily. Interacts with p53/TP53, histone H1 and CTCF. Component of some MLL1/MLL complex, at least composed of the core components KMT2A/MLL1, ASH2L, HCFC1/HCF1, WDR5 and RBBP5, as well as the facultative components BACC1, CHD8, E2F6, HSP70, INO80C, KANSL1, LAS1L, MAX, MCRS1, MGA, KAT8/MOF, PELP1, PHF20, PRP31, RING2, RUVB1/TIP49A, RUVB2/TIP49B, SENP3, TAF1, TAF4, TAF6, TAF7, TAF9 and TEX10. Interacts with CHD7. Interacts with FAM124B. Interacts with CTNNB1. Interacts with PIAS3. Interacts with TLK2. Interacts with HNRNPL in an RNA-dependent manner. Sumoylated.

The protein localises to the nucleus. It carries out the reaction ATP + H2O = ADP + phosphate + H(+). Its function is as follows. ATP-dependent chromatin-remodeling factor, it slides nucleosomes along DNA; nucleosome sliding requires ATP. Acts as a transcription repressor by remodeling chromatin structure and recruiting histone H1 to target genes. Suppresses p53/TP53-mediated apoptosis by recruiting histone H1 and preventing p53/TP53 transactivation activity. Acts as a negative regulator of Wnt signaling pathway by regulating beta-catenin (CTNNB1) activity. Negatively regulates CTNNB1-targeted gene expression by being recruited specifically to the promoter regions of several CTNNB1 responsive genes. Involved in both enhancer blocking and epigenetic remodeling at chromatin boundary via its interaction with CTCF. Acts as a suppressor of STAT3 activity by suppressing the LIF-induced STAT3 transcriptional activity. Also acts as a transcription activator via its interaction with ZNF143 by participating in efficient U6 RNA polymerase III transcription. Regulates alternative splicing of a core group of genes involved in neuronal differentiation, cell cycle and DNA repair. Enables H3K36me3-coupled transcription elongation and co-transcriptional RNA processing likely via interaction with HNRNPL. In Rattus norvegicus (Rat), this protein is Chromodomain-helicase-DNA-binding protein 8.